The primary structure comprises 311 residues: Methionyl-tRNA formyltransferase (311 aa).

(6S)-5,6,7,8-tetrahydrofolate is bound at residue serine 110–proline 113.

The protein belongs to the Fmt family.

The enzyme catalyses L-methionyl-tRNA(fMet) + (6R)-10-formyltetrahydrofolate = N-formyl-L-methionyl-tRNA(fMet) + (6S)-5,6,7,8-tetrahydrofolate + H(+). Its function is as follows. Attaches a formyl group to the free amino group of methionyl-tRNA(fMet). The formyl group appears to play a dual role in the initiator identity of N-formylmethionyl-tRNA by promoting its recognition by IF2 and preventing the misappropriation of this tRNA by the elongation apparatus. The chain is Methionyl-tRNA formyltransferase from Streptococcus pyogenes serotype M3 (strain ATCC BAA-595 / MGAS315).